The following is a 351-amino-acid chain: Porphobilinogen deaminase (351 aa).

C242 carries the post-translational modification S-(dipyrrolylmethanemethyl)cysteine.

The protein belongs to the HMBS family. As to quaternary structure, monomer. The cofactor is dipyrromethane.

It carries out the reaction 4 porphobilinogen + H2O = hydroxymethylbilane + 4 NH4(+). It functions in the pathway porphyrin-containing compound metabolism; protoporphyrin-IX biosynthesis; coproporphyrinogen-III from 5-aminolevulinate: step 2/4. Functionally, tetrapolymerization of the monopyrrole PBG into the hydroxymethylbilane pre-uroporphyrinogen in several discrete steps. This Rickettsia peacockii (strain Rustic) protein is Porphobilinogen deaminase.